A 326-amino-acid chain; its full sequence is MTDASSLPLYPHRHLLGISDLSPADIELLLDRADRAVAISRQSEKKTSTLRGRTQINLFYEASTRTQSSFELAGKRLGADVMNMSVASSSVKKGETLIDTAMTLNAMRPDILIIRHQSAGAAALLAQKVGCSVVNAGDGAHEHPTQALLDALTIRRAKGPLSKLIVAICGDILHSRVARSNIMLLNALGAQVRVVAPSTLLPSGIEKMGVIVTRSMAEGLKDADVVMMLRLQRERMEGAFVPSVREYFRYFGLDAEKLKAAKGDALVMHPGPMNRGVEIASEIADGPQSVIQEQVEMGVAVRMAVMEALLDPRRNQEGRKQEGRGA.

Residues Arg-65 and Thr-66 each contribute to the carbamoyl phosphate site. Lys-93 is a binding site for L-aspartate. Arg-115, His-143, and Gln-146 together coordinate carbamoyl phosphate. Positions 176 and 230 each coordinate L-aspartate. Gly-271 and Pro-272 together coordinate carbamoyl phosphate.

Belongs to the aspartate/ornithine carbamoyltransferase superfamily. ATCase family. In terms of assembly, heterododecamer (2C3:3R2) of six catalytic PyrB chains organized as two trimers (C3), and six regulatory PyrI chains organized as three dimers (R2).

It carries out the reaction carbamoyl phosphate + L-aspartate = N-carbamoyl-L-aspartate + phosphate + H(+). It functions in the pathway pyrimidine metabolism; UMP biosynthesis via de novo pathway; (S)-dihydroorotate from bicarbonate: step 2/3. Its function is as follows. Catalyzes the condensation of carbamoyl phosphate and aspartate to form carbamoyl aspartate and inorganic phosphate, the committed step in the de novo pyrimidine nucleotide biosynthesis pathway. The chain is Aspartate carbamoyltransferase catalytic subunit from Mesorhizobium japonicum (strain LMG 29417 / CECT 9101 / MAFF 303099) (Mesorhizobium loti (strain MAFF 303099)).